The following is a 1393-amino-acid chain: Rab3 GTPase-activating protein non-catalytic subunit (1393 aa).

The disordered stretch occupies residues 36–67 (RDPSKSTDWEDDGWGAWEENEPQEPEEEGNTC). Serine 39 carries the phosphoserine modification. Residues 44–64 (WEDDGWGAWEENEPQEPEEEG) show a composition bias toward acidic residues. Serine 450 bears the Phosphoserine mark. A Phosphothreonine modification is found at threonine 901. Phosphoserine is present on residues serine 916 and serine 978.

The protein belongs to the Rab3-GAP regulatory subunit family. In terms of assembly, the Rab3 GTPase-activating complex is a heterodimer composed of RAB3GAP1 and RAB3GAP2. The Rab3 GTPase-activating complex interacts with DMXL2. Interacts with LMAN1. As to expression, ubiquitous.

The protein resides in the cytoplasm. It is found in the endoplasmic reticulum. Regulatory subunit of the Rab3 GTPase-activating (Rab3GAP) complex composed of RAB3GAP1 and RAB3GAP2, which has GTPase-activating protein (GAP) activity towards various Rab3 subfamily members (RAB3A, RAB3B, RAB3C and RAB3D), RAB5A and RAB43, and guanine nucleotide exchange factor (GEF) activity towards RAB18. As part of the Rab3GAP complex, acts as a GAP for Rab3 proteins by converting active RAB3-GTP to the inactive form RAB3-GDP. Rab3 proteins are involved in regulated exocytosis of neurotransmitters and hormones. The Rab3GAP complex acts as a GEF for RAB18 by promoting the conversion of inactive RAB18-GDP to the active form RAB18-GTP. Recruits and stabilizes RAB18 at the cis-Golgi membrane in human fibroblasts where RAB18 is most likely activated. Also involved in RAB18 recruitment at the endoplasmic reticulum (ER) membrane where it maintains proper ER structure. Required for normal eye and brain development. May participate in neurodevelopmental processes such as proliferation, migration and differentiation before synapse formation, and non-synaptic vesicular release of neurotransmitters. This is Rab3 GTPase-activating protein non-catalytic subunit from Homo sapiens (Human).